The following is an 82-amino-acid chain: DinI-like protein (82 aa).

It belongs to the DinI family.

The polypeptide is DinI-like protein (Enterobacteria phage VT1-Sakai).